The primary structure comprises 361 residues: D-alanine--D-alanine ligase (361 aa).

The ATP-grasp domain occupies 144 to 350 (KLAAADAGLA…FMELTDRLIR (207 aa)). 177 to 232 (VASLSFPMFVKPVSLGSSVGITKVNSESELAEAITHACSLDSKVLIEQAVKGREVE) lines the ATP pocket. Mg(2+) contacts are provided by Asp-303, Glu-317, and Asn-319.

Belongs to the D-alanine--D-alanine ligase family. It depends on Mg(2+) as a cofactor. Requires Mn(2+) as cofactor.

The protein localises to the cytoplasm. The catalysed reaction is 2 D-alanine + ATP = D-alanyl-D-alanine + ADP + phosphate + H(+). It functions in the pathway cell wall biogenesis; peptidoglycan biosynthesis. Cell wall formation. The chain is D-alanine--D-alanine ligase from Chlorobium luteolum (strain DSM 273 / BCRC 81028 / 2530) (Pelodictyon luteolum).